The following is a 356-amino-acid chain: Nicotinate-nucleotide--dimethylbenzimidazole phosphoribosyltransferase (356 aa).

E317 serves as the catalytic Proton acceptor.

The protein belongs to the CobT family. In terms of assembly, homodimer.

It catalyses the reaction 5,6-dimethylbenzimidazole + nicotinate beta-D-ribonucleotide = alpha-ribazole 5'-phosphate + nicotinate + H(+). The protein operates within nucleoside biosynthesis; alpha-ribazole biosynthesis; alpha-ribazole from 5,6-dimethylbenzimidazole: step 1/2. In terms of biological role, catalyzes the synthesis of alpha-ribazole-5'-phosphate from nicotinate mononucleotide (NAMN) and 5,6-dimethylbenzimidazole (DMB). The protein is Nicotinate-nucleotide--dimethylbenzimidazole phosphoribosyltransferase of Salmonella typhi.